The following is a 289-amino-acid chain: Bidirectional sugar transporter SWEET15 (289 aa).

At 1-10 (MAMAMANHHT) the chain is on the extracellular side. A helical membrane pass occupies residues 11-31 (LGLIFGILGNIISFLVYFAPA). The region spanning 14–100 (IFGILGNIIS…LYFFYAPMQA (87 aa)) is the MtN3/slv 1 domain. At 32 to 45 (PTFYRIYKRKSAEG) the chain is on the cytoplasmic side. Residues 46 to 66 (FHSLPYIVALFSAMLWLYYAL) traverse the membrane as a helical segment. Residues 67–70 (LKKD) are Extracellular-facing. A helical transmembrane segment spans residues 71–91 (AFLLITINSFGCAIESFYILL). At 92-106 (YFFYAPMQAKKQTLK) the chain is on the cytoplasmic side. A helical membrane pass occupies residues 107 to 127 (VVISLNVGVFSILVVLIQFLL). The Extracellular portion of the chain corresponds to 128–134 (KGSNRIN). The chain crosses the membrane as a helical span at residues 135-155 (VFGWICASFSVAVFAAPLSIV). A MtN3/slv 2 domain is found at 136–219 (FGWICASFSV…VLYGFYRNAG (84 aa)). Topologically, residues 156–167 (AKVIRTKSVEFM) are cytoplasmic. The helical transmembrane segment at 168–188 (PFSLSFFLTLSAIMWFAYGLL) threads the bilayer. The Extracellular portion of the chain corresponds to 189–193 (KNDPC). A helical transmembrane segment spans residues 194–214 (VAIPNILGVILGLVQMVLYGF). At 215–289 (YRNAGKEKME…GELQPNGSTV (75 aa)) the chain is on the cytoplasmic side. The interval 249–289 (GAQQNGIKKSGSEDVKDDEETGNREKSTENSGELQPNGSTV) is disordered. The span at 277-289 (ENSGELQPNGSTV) shows a compositional bias: polar residues.

The protein belongs to the SWEET sugar transporter family. Forms homooligomers and/or heterooligomers.

The protein resides in the cell membrane. Its function is as follows. Mediates both low-affinity uptake and efflux of sugar across the plasma membrane. This chain is Bidirectional sugar transporter SWEET15, found in Vitis vinifera (Grape).